Here is a 1081-residue protein sequence, read N- to C-terminus: DNA polymerase delta catalytic subunit (1081 aa).

Residues 1 to 22 are disordered; it reads MTSKRPGGSSFQPEVKRKRESD. Zn(2+) is bound by residues C981, C984, C998, and C1001. The CysA-type zinc-finger motif lies at 981–1001; sequence CLGCKSVLPRAESENAVCKHC. [4Fe-4S] cluster-binding residues include C1030, C1033, C1043, and C1048. The CysB motif motif lies at 1030-1048; the sequence is CQNCAKTMQDKVNCSARDC.

The protein belongs to the DNA polymerase type-B family. As to quaternary structure, heterodimer with subunits of 125 kDa and 50 kDa. The 125 kDa subunit contains the polymerase active site and most likely the active site for the 3'-5' exonuclease activity. [4Fe-4S] cluster serves as cofactor.

It is found in the nucleus. The catalysed reaction is DNA(n) + a 2'-deoxyribonucleoside 5'-triphosphate = DNA(n+1) + diphosphate. Possesses two enzymatic activities: DNA synthesis (polymerase) and an exonucleolytic activity that degrades single stranded DNA in the 3'- to 5'-direction. Required with its accessory proteins (proliferating cell nuclear antigen (PCNA) and replication factor C (RFC) or activator 1) for leading strand synthesis. Also involved in completing Okazaki fragments initiated by the DNA polymerase alpha/primase complex. The sequence is that of DNA polymerase delta catalytic subunit from Caenorhabditis elegans.